We begin with the raw amino-acid sequence, 343 residues long: WAT1-related protein At1g43650 (343 aa).

A run of 10 helical transmembrane segments spans residues 9–29 (MAMVFVQIVYAGMPLLSKVAI), 36–56 (FVFVFYRQAFAALALSPFAFF), 65–85 (LSFILLLKIFFISLCGLTLSL), 98–118 (TFAAATTNAIPSITFVLALLF), 130–150 (GVAKVTGSMVGMLGALVFAFV), 175–195 (SVKGSITMLAANTCWCLWIIM), 209–229 (LVALQCLFSCIQSAVWAVAVN), 239–259 (FGLPLLSMAYCGIMVTGLTYW), 272–292 (FTALYTPLALILTCIVSSFLF), and 296–316 (FYLGSVGGAVLLVCGLYLGLW). EamA domains lie at 16-139 (IVYA…GSMV) and 188-313 (CWCL…GLYL).

Belongs to the drug/metabolite transporter (DMT) superfamily. Plant drug/metabolite exporter (P-DME) (TC 2.A.7.4) family.

Its subcellular location is the membrane. The chain is WAT1-related protein At1g43650 from Arabidopsis thaliana (Mouse-ear cress).